A 285-amino-acid polypeptide reads, in one-letter code: Ribosomal RNA small subunit methyltransferase I (285 aa).

It belongs to the methyltransferase superfamily. RsmI family.

The protein localises to the cytoplasm. The enzyme catalyses cytidine(1402) in 16S rRNA + S-adenosyl-L-methionine = 2'-O-methylcytidine(1402) in 16S rRNA + S-adenosyl-L-homocysteine + H(+). In terms of biological role, catalyzes the 2'-O-methylation of the ribose of cytidine 1402 (C1402) in 16S rRNA. The polypeptide is Ribosomal RNA small subunit methyltransferase I (Buchnera aphidicola subsp. Schizaphis graminum (strain Sg)).